The sequence spans 1137 residues: Dendrite extension defective protein 1 (1137 aa).

The first 41 residues, 1–41, serve as a signal peptide directing secretion; the sequence is MLAHTHRINKCLYGQNQMRNRHALLGALPPIFLLLLPLISC. At 43–1005 the chain is on the extracellular side; the sequence is KFDPERIAAR…HAEEQSPRLA (963 aa). The NIDO 1 domain occupies 163 to 302; that stretch reads PFWNRNDLRN…GEWMFELSEL (140 aa). 2 N-linked (GlcNAc...) asparagine glycosylation sites follow: Asn240 and Asn416. Positions 409–450 constitute an EGF-like; calcium-binding domain; it reads DVDECKTNSTICHKNAICTNTPGRYFCMCKEGFSGDGQNDCS. Cystine bridges form between Cys413-Cys426, Cys420-Cys435, and Cys437-Cys449. The NIDO 2 domain occupies 519–659; that stretch reads PFFGPIDLSR…GTWLYRIDKA (141 aa). The N-linked (GlcNAc...) asparagine glycan is linked to Asn571. Polar residues predominate over residues 738 to 749; the sequence is IGNQQRQQTTKA. 5 disordered regions span residues 738 to 765, 795 to 856, 878 to 897, 906 to 933, and 978 to 998; these read IGNQ…HRPI, FRPN…PFEA, QTTK…EDLS, TEED…TKAH, and NSQP…GHAE. Asn756 carries N-linked (GlcNAc...) asparagine glycosylation. Polar residues predominate over residues 798 to 809; that stretch reads NQRNGVQKSTQR. A compositionally biased stretch (basic and acidic residues) spans 819 to 833; the sequence is PLKEEATTSVPREKT. Residues 906-915 show a composition bias toward acidic residues; that stretch reads TEEDEEEAEI. Over residues 916–933 the composition is skewed to low complexity; the sequence is STETTTEMSSTTTTTKAH. Positions 978 to 992 are enriched in polar residues; the sequence is NSQPPKQRNDNQPTV. A helical transmembrane segment spans residues 1006 to 1026; it reads ILLPVMIILAWLVILVCIGAV. Residues 1027–1037 lie on the Cytoplasmic side of the membrane; that stretch reads VCCKRRNSRES. A disordered region spans residues 1106–1125; the sequence is ARLSTQERQSPPSFVNNGYT.

Post-translationally, may be proteolytically cleaved and secreted.

The protein localises to the membrane. It localises to the cell projection. The protein resides in the dendrite. It is found in the secreted. In terms of biological role, along with dyf-7, enables neurite growth and maintenance by anchoring amphid dendritic tips during neuron cell body migration in embryonic and larval development. Promotes seam cell remodeling during the dauer phase. Plays a role in positively regulating locomotion during the dauer phase. This Caenorhabditis elegans protein is Dendrite extension defective protein 1.